The chain runs to 650 residues: Cytosolic Fe-S cluster assembly factor NAR1 (650 aa).

The [4Fe-4S] cluster site is built by cysteine 22, cysteine 81, cysteine 84, cysteine 87, cysteine 215, cysteine 270, cysteine 480, and cysteine 484.

The protein belongs to the NARF family.

In terms of biological role, component of the cytosolic Fe/S protein assembly machinery. Required for maturation of extramitochondrial Fe/S proteins. May play a role in the transfer of pre-assembled Fe/S clusters to target apoproteins. The polypeptide is Cytosolic Fe-S cluster assembly factor NAR1 (NAR1) (Cryptococcus neoformans var. neoformans serotype D (strain JEC21 / ATCC MYA-565) (Filobasidiella neoformans)).